The primary structure comprises 512 residues: Sucrose transport protein SUC5 (512 aa).

The disordered stretch occupies residues 1-27; it reads MGALEAERAANNATALETQSSPEDLGQ. At 1–33 the chain is on the cytoplasmic side; that stretch reads MGALEAERAANNATALETQSSPEDLGQPSPLRK. Polar residues predominate over residues 11–22; that stretch reads NNATALETQSSP. Position 20 is a phosphoserine (serine 20). Residues 34-54 form a helical membrane-spanning segment; the sequence is IISVASIAAGVQFGWALQLSL. Residues 55-67 lie on the Extracellular side of the membrane; that stretch reads LTPYIQLLGIPHK. The chain crosses the membrane as a helical span at residues 68 to 88; sequence WSSYMWLCGPISGMIVQPIVG. At 89 to 102 the chain is on the cytoplasmic side; sequence YHSDRCESRFGRRR. A helical transmembrane segment spans residues 103–123; the sequence is PFIAAGVALVAVSVFLIGFAA. The Extracellular portion of the chain corresponds to 124 to 140; that stretch reads DMGHSFGDKLENKVRTR. The chain crosses the membrane as a helical span at residues 141-161; sequence AIIIFLTGFWFLDVANNTLQG. Topologically, residues 162–179 are cytoplasmic; the sequence is PCRAFLADLAAGDAKKTR. A helical membrane pass occupies residues 180 to 200; it reads VANACFSFFMAVGNVLGYAAG. Over 201–225 the chain is Extracellular; that stretch reads SYTNLHKMFPFTMTKACDIYCANLK. Residues 226–246 traverse the membrane as a helical segment; the sequence is TCFFLSITLLLIVTFSSLWYV. Residues 247–281 lie on the Cytoplasmic side of the membrane; it reads KDKQWSPPQGDKEEKTSSLFFFGEIFGAVRHMKRP. The chain crosses the membrane as a helical span at residues 282–302; the sequence is MVMLLIVTVINWIAWFPFILY. The Extracellular portion of the chain corresponds to 303 to 333; sequence DTDWMGREVYGGNSDGDERSKKLYDQGVQAG. Residues 334 to 354 traverse the membrane as a helical segment; sequence ALGLMFNSILLGFVSLGVESI. Residues 355 to 363 are Cytoplasmic-facing; the sequence is GRKMGGAKR. The helical transmembrane segment at 364 to 384 threads the bilayer; that stretch reads LWGCVNFILAIGLAMTVLVTK. Topologically, residues 385–406 are extracellular; the sequence is SAEHHREIAGPLAGPSSGIKAG. The helical transmembrane segment at 407–427 threads the bilayer; that stretch reads VFSLFTVLGIPLAITYSIPFA. Over 428-440 the chain is Cytoplasmic; the sequence is LASIFSTNSGAGQ. The helical transmembrane segment at 441-461 threads the bilayer; sequence GLSLGVLNIAICIPQMIVSFS. The Extracellular segment spans residues 462 to 473; the sequence is SGPLDAQFGGGN. A helical membrane pass occupies residues 474–494; the sequence is LPSFVVGAIAAAVSGVLALTV. Topologically, residues 495 to 512 are cytoplasmic; it reads LPSPPPDAPAMSGAMGFH.

The protein belongs to the glycoside-pentoside-hexuronide (GPH) cation symporter transporter (TC 2.A.2.4) family. Widely expressed. Expressed in the endosperm and on the epidermis of the outer surface of the cotyledons of torpedo-stage or older embryos.

Its subcellular location is the cell membrane. It carries out the reaction sucrose(out) + H(+)(out) = sucrose(in) + H(+)(in). It functions in the pathway glycan biosynthesis; sucrose metabolism. Inhibited by protonophores (e.g. carbonyl cyanide m-chlorophenyl-hydrazone (CCCP)) and SH group inhibitors (e.g. p-chloromercuribenzene sulphonic acid (PCMBS)). Functionally, responsible in a heterologous system for the transport of sucrose into the cell, with the concomitant uptake of protons (symport system). Can also transport biotin, and probably maltose at a lesser rate. In planta, the role of SUC5 for the transport of sucrose seems to be negligible. Plays a role in the nutrition of the filial tissues during early seed development and is probably involved in the import of biotin into the endosperm and the embryo epidermis. This Arabidopsis thaliana (Mouse-ear cress) protein is Sucrose transport protein SUC5.